Consider the following 112-residue polypeptide: Protein SMALL AUXIN UP-REGULATED RNA 10 (112 aa).

This sequence belongs to the ARG7 family. In terms of tissue distribution, confined to the veins and petioles of rosette leaves and cauline leaves, and specifically expressed at the abaxial side of inflorescence branche; relocates to both the adaxial (Ad) and abaxial (Ab) sides of the branch in reduced red:far-red (R:FR) light, during shade. Also present in flowers.

It localises to the cell membrane. Functionally, provide a mechanistic link between auxin and plasma membrane H(+)-ATPases (PM H(+)-ATPases, e.g. AHA1 and AHA2), and triggers PM H(+)-ATPases activity by promoting phosphorylation of their C-terminal autoinhibitory domain as a result of PP2C-D subfamily of type 2C phosphatases inhibition, thus leading to the acidification of the apoplast and the facilitation of solutes and water uptake to drive cell expansion. Triggers plant growth probably by promoting cell elongation. Regulates branch angles and bending. This Arabidopsis thaliana (Mouse-ear cress) protein is Protein SMALL AUXIN UP-REGULATED RNA 10.